The chain runs to 371 residues: Dual-specificity RNA methyltransferase RlmN (371 aa).

The active-site Proton acceptor is the Glu86. Residues 105 to 338 enclose the Radical SAM core domain; it reads RHARYTICVS…CTIRQSKGLD (234 aa). Cys112 and Cys343 are oxidised to a cystine. [4Fe-4S] cluster is bound by residues Cys119, Cys123, and Cys126. Residues 169–170, Ser201, 224–226, and Asn300 contribute to the S-adenosyl-L-methionine site; these read GE and SLH. Catalysis depends on Cys343, which acts as the S-methylcysteine intermediate. Residues 348–363 are compositionally biased toward polar residues; it reads QRSQNLSPSNNNTSKP. Residues 348–371 are disordered; that stretch reads QRSQNLSPSNNNTSKPSDIKKSES.

This sequence belongs to the radical SAM superfamily. RlmN family. The cofactor is [4Fe-4S] cluster.

The protein resides in the cytoplasm. It catalyses the reaction adenosine(2503) in 23S rRNA + 2 reduced [2Fe-2S]-[ferredoxin] + 2 S-adenosyl-L-methionine = 2-methyladenosine(2503) in 23S rRNA + 5'-deoxyadenosine + L-methionine + 2 oxidized [2Fe-2S]-[ferredoxin] + S-adenosyl-L-homocysteine. The enzyme catalyses adenosine(37) in tRNA + 2 reduced [2Fe-2S]-[ferredoxin] + 2 S-adenosyl-L-methionine = 2-methyladenosine(37) in tRNA + 5'-deoxyadenosine + L-methionine + 2 oxidized [2Fe-2S]-[ferredoxin] + S-adenosyl-L-homocysteine. Its function is as follows. Specifically methylates position 2 of adenine 2503 in 23S rRNA and position 2 of adenine 37 in tRNAs. m2A2503 modification seems to play a crucial role in the proofreading step occurring at the peptidyl transferase center and thus would serve to optimize ribosomal fidelity. In Campylobacter curvus (strain 525.92), this protein is Dual-specificity RNA methyltransferase RlmN.